The primary structure comprises 79 residues: Putative defensin-like protein 29 (79 aa).

A signal peptide spans 1–26 (MASSGKCVFLVFLCMVALLAPSEVHA). Intrachain disulfides connect Cys45–Cys65, Cys51–Cys74, and Cys55–Cys76.

This sequence belongs to the DEFL family.

The protein resides in the secreted. In Arabidopsis thaliana (Mouse-ear cress), this protein is Putative defensin-like protein 29.